The sequence spans 39 residues: Cytochrome b6-f complex subunit 5 (39 aa).

The helical transmembrane segment at Leu5–Ala25 threads the bilayer.

This sequence belongs to the PetG family. As to quaternary structure, the 4 large subunits of the cytochrome b6-f complex are cytochrome b6, subunit IV (17 kDa polypeptide, PetD), cytochrome f and the Rieske protein, while the 4 small subunits are PetG, PetL, PetM and PetN. The complex functions as a dimer.

Its subcellular location is the cellular thylakoid membrane. Its function is as follows. Component of the cytochrome b6-f complex, which mediates electron transfer between photosystem II (PSII) and photosystem I (PSI), cyclic electron flow around PSI, and state transitions. PetG is required for either the stability or assembly of the cytochrome b6-f complex. This chain is Cytochrome b6-f complex subunit 5, found in Prochlorococcus marinus (strain MIT 9211).